A 55-amino-acid chain; its full sequence is Protein CADMIUM TOLERANCE 1 (55 aa).

Residues Gly24–Tyr40 form a helical membrane-spanning segment.

This sequence belongs to the CYSTM1 family.

Its subcellular location is the cell membrane. It is found in the secreted. The protein resides in the cell wall. Confers resistance to heavy metal ions (e.g. cadmium (CdCl(2)) and copper (CuCl(2))) by chelating them at the plasma membrane of root cells, thus stopping their entry and reducing their accumulation. This chain is Protein CADMIUM TOLERANCE 1, found in Echinochloa crus-galli subsp. caudata (Cockspur).